Consider the following 642-residue polypeptide: Poly(A) polymerase beta (642 aa).

Residues 101-103 (FGS), threonine 110, 114-116 (DID), aspartate 168, lysine 229, tyrosine 238, and 247-248 (GV) each bind ATP. Residues aspartate 114, aspartate 116, and aspartate 168 each coordinate Mg(2+). Disordered regions lie at residues 530-553 (SENSMTAPSPTGTMKTGPLTGNPQ) and 620-642 (LVNHPSRPSGNTATNIPNPILGV). The span at 620-636 (LVNHPSRPSGNTATNIP) shows a compositional bias: polar residues.

It belongs to the poly(A) polymerase family. Interacts with GSG1. Mg(2+) is required as a cofactor. Mn(2+) serves as cofactor. As to expression, testis specific.

The protein localises to the cytoplasm. It localises to the nucleus. It catalyses the reaction RNA(n) + ATP = RNA(n)-3'-adenine ribonucleotide + diphosphate. This chain is Poly(A) polymerase beta, found in Mus musculus (Mouse).